We begin with the raw amino-acid sequence, 689 residues long: Glycine--tRNA ligase beta subunit (689 aa).

It belongs to the class-II aminoacyl-tRNA synthetase family. As to quaternary structure, tetramer of two alpha and two beta subunits.

It localises to the cytoplasm. The catalysed reaction is tRNA(Gly) + glycine + ATP = glycyl-tRNA(Gly) + AMP + diphosphate. The polypeptide is Glycine--tRNA ligase beta subunit (Erwinia tasmaniensis (strain DSM 17950 / CFBP 7177 / CIP 109463 / NCPPB 4357 / Et1/99)).